Here is a 451-residue protein sequence, read N- to C-terminus: C4-dicarboxylate transport protein (451 aa).

9 helical membrane-spanning segments follow: residues 17–37, 53–73, 85–105, 153–173, 193–213, 231–251, 306–326, 339–359, and 361–381; these read SLYV…HFYP, LIKM…IAGM, LALL…LIVV, AFAK…GFAL, VLFT…FGAM, LMGS…GLIA, GYSF…VFIA, ITLL…TGSG, and IVLA…LALI.

Belongs to the dicarboxylate/amino acid:cation symporter (DAACS) (TC 2.A.23) family.

It localises to the cell inner membrane. Functionally, responsible for the transport of dicarboxylates such as succinate, fumarate, and malate from the periplasm across the membrane. The polypeptide is C4-dicarboxylate transport protein (Paracidovorax citrulli (strain AAC00-1) (Acidovorax citrulli)).